The primary structure comprises 4835 residues: Midasin (4835 aa).

AAA-ATPase protomer regions lie at residues 12-161 (EVLR…PLVL), 324-689 (RSLD…HRFR), 797-1049 (MTTI…AEII), 1096-1375 (KFQD…DYIT), 1489-1738 (APTT…FGYR), and 1821-2110 (ALEA…SIDI). ATP is bound by residues 31–38 (GPSASGRT), 356–363 (GPTGIGKT), 814–821 (GTTSSGKT), 1127–1134 (GVSGAGKT), 1513–1520 (GDPGVGKS), and 1839–1846 (GSPESGKS). The segment at 2197-4058 (SVFIASTLNA…DGTGDQNVSK (1862 aa)) is linker. 2 disordered regions span residues 4033–4056 (DQKETDNDNQSGLGLGDGTGDQNV) and 4108–4523 (IEEE…LLNP). 5 stretches are compositionally biased toward acidic residues: residues 4109–4133 (EEEDSNGSDEEEVLEKEMGDEQGEA), 4141–4150 (EDDDSAEEYS), 4226–4241 (ADGEDETVNEELEEEQ), 4282–4291 (VDIDDNEASD), and 4315–4330 (NDEEEMQKDTEYDQEN). Residues 4331 to 4346 (ITDSNPDANEVGTNDQ) are compositionally biased toward polar residues. Basic and acidic residues-rich tracts occupy residues 4347 to 4360 (KQTHEDNDQFRQEN), 4394 to 4415 (EFQRIWKERLNIHDRESEKDEA), and 4429 to 4438 (VEFDDSKSGR). Residues 4468 to 4477 (HNSSCETSQS) are compositionally biased toward polar residues. Residues 4478-4488 (SHDRPPAEHLN) show a composition bias toward basic and acidic residues. The region spanning 4629–4818 (QVLLAVDDSS…RHIEDLPETL (190 aa)) is the VWFA domain.

It belongs to the midasin family. In terms of assembly, associates with pre-60S ribosomes in the nucleoplasm.

It localises to the nucleus. It is found in the nucleolus. The protein resides in the nucleoplasm. Nuclear chaperone required for maturation and nuclear export of pre-60S ribosome subunits. Functions at successive maturation steps to remove ribosomal factors at critical transition points, first driving the exit of early pre-60S particles from the nucleolus and then driving late pre-60S particles from the nucleus. The polypeptide is Midasin (MDN1) (Giardia intestinalis (Giardia lamblia)).